A 384-amino-acid chain; its full sequence is S-adenosylmethionine synthase (384 aa).

Residue His-15 participates in ATP binding. Asp-17 is a binding site for Mg(2+). Glu-43 serves as a coordination point for K(+). Positions 56 and 99 each coordinate L-methionine. Positions Gln-99–Arg-109 are flexible loop. ATP contacts are provided by residues Asp-164 to Lys-166, Arg-230 to Phe-231, Asp-239, Arg-245 to Lys-246, Ala-262, and Lys-266. Asp-239 lines the L-methionine pocket. Residue Lys-270 coordinates L-methionine.

This sequence belongs to the AdoMet synthase family. As to quaternary structure, homotetramer; dimer of dimers. Mg(2+) is required as a cofactor. It depends on K(+) as a cofactor.

Its subcellular location is the cytoplasm. The catalysed reaction is L-methionine + ATP + H2O = S-adenosyl-L-methionine + phosphate + diphosphate. Its pathway is amino-acid biosynthesis; S-adenosyl-L-methionine biosynthesis; S-adenosyl-L-methionine from L-methionine: step 1/1. In terms of biological role, catalyzes the formation of S-adenosylmethionine (AdoMet) from methionine and ATP. The overall synthetic reaction is composed of two sequential steps, AdoMet formation and the subsequent tripolyphosphate hydrolysis which occurs prior to release of AdoMet from the enzyme. The polypeptide is S-adenosylmethionine synthase (Haemophilus influenzae (strain ATCC 51907 / DSM 11121 / KW20 / Rd)).